The sequence spans 128 residues: Large ribosomal subunit protein eL22 (128 aa).

This sequence belongs to the eukaryotic ribosomal protein eL22 family. Component of the large ribosomal subunit.

The protein localises to the cytoplasm. Functionally, component of the large ribosomal subunit. The ribosome is a large ribonucleoprotein complex responsible for the synthesis of proteins in the cell. This Xenopus tropicalis (Western clawed frog) protein is Large ribosomal subunit protein eL22 (rpl22).